Consider the following 508-residue polypeptide: Nucleolar complex protein 4 homolog (508 aa).

The next 3 membrane-spanning stretches (helical) occupy residues 288–308 (VAYG…FILI), 341–361 (HLAD…AAFI), and 367–387 (LALT…CNLF).

This sequence belongs to the CBF/MAK21 family.

The protein localises to the nucleus membrane. The protein resides in the nucleus. Its subcellular location is the nucleolus. This Gallus gallus (Chicken) protein is Nucleolar complex protein 4 homolog (NOC4L).